The following is a 173-amino-acid chain: Putative phosphoesterase GWCH70_0799 (173 aa).

H34 (proton donor) is an active-site residue. Short sequence motifs (HXTX) lie at residues 34–37 and 115–118; these read HLTL and HITI. H115 (proton acceptor) is an active-site residue.

This sequence belongs to the 2H phosphoesterase superfamily. YjcG family.

In Geobacillus sp. (strain WCH70), this protein is Putative phosphoesterase GWCH70_0799.